A 155-amino-acid polypeptide reads, in one-letter code: Late embryogenesis abundant protein 2 (155 aa).

The disordered stretch occupies residues 1–155 (MTSHDQSYRA…DKDHFPTNRH (155 aa)). Composition is skewed to basic and acidic residues over residues 11-21 (GEAKGRTEEKT) and 28-39 (IEDKAQAAKEKA). A compositionally biased stretch (low complexity) spans 40-78 (QQAAQTAKDKTSQTAQAAKEKTQQTAQAAKDKTQQTTQA). 2 tandem repeats follow at residues 53 to 63 (TAQAAKEKTQQ) and 64 to 74 (TAQAAKDKTQQ). Residues 53-74 (TAQAAKEKTQQTAQAAKDKTQQ) form a 2 X 11 AA approximate tandem repeats of T-A-Q-A-A-K-E-K-T-Q-Q region. The span at 79 to 95 (TKEKAQDTTGRAKEKGS) shows a compositional bias: basic and acidic residues. A compositionally biased stretch (polar residues) spans 97–120 (MGQSTKETAQSGKDNSAGFLQQTG). The segment covering 144-155 (DQDKDHFPTNRH) has biased composition (basic and acidic residues).

This sequence belongs to the LEA type 4 family. As to expression, highest expression is found in seeds. No expression detected in adult tissues.

The sequence is that of Late embryogenesis abundant protein 2 from Cicer arietinum (Chickpea).